Consider the following 81-residue polypeptide: Acyl carrier protein (81 aa).

One can recognise a Carrier domain in the interval 2-80; that stretch reads ASEQEILSGL…DAVAYISQAQ (79 aa). Position 40 is an O-(pantetheine 4'-phosphoryl)serine (S40).

This sequence belongs to the acyl carrier protein (ACP) family. Post-translationally, 4'-phosphopantetheine is transferred from CoA to a specific serine of apo-ACP by AcpS. This modification is essential for activity because fatty acids are bound in thioester linkage to the sulfhydryl of the prosthetic group.

Its subcellular location is the cytoplasm. Its pathway is lipid metabolism; fatty acid biosynthesis. In terms of biological role, carrier of the growing fatty acid chain in fatty acid biosynthesis. The polypeptide is Acyl carrier protein (Kineococcus radiotolerans (strain ATCC BAA-149 / DSM 14245 / SRS30216)).